We begin with the raw amino-acid sequence, 380 residues long: Anhydro-N-acetylmuramic acid kinase (380 aa).

9–16 (GTSADGVD) is an ATP binding site.

This sequence belongs to the anhydro-N-acetylmuramic acid kinase family.

It carries out the reaction 1,6-anhydro-N-acetyl-beta-muramate + ATP + H2O = N-acetyl-D-muramate 6-phosphate + ADP + H(+). The protein operates within amino-sugar metabolism; 1,6-anhydro-N-acetylmuramate degradation. It functions in the pathway cell wall biogenesis; peptidoglycan recycling. Catalyzes the specific phosphorylation of 1,6-anhydro-N-acetylmuramic acid (anhMurNAc) with the simultaneous cleavage of the 1,6-anhydro ring, generating MurNAc-6-P. Is required for the utilization of anhMurNAc either imported from the medium or derived from its own cell wall murein, and thus plays a role in cell wall recycling. The polypeptide is Anhydro-N-acetylmuramic acid kinase (Synechococcus sp. (strain CC9902)).